We begin with the raw amino-acid sequence, 860 residues long: DDB1- and CUL4-associated factor 6 (860 aa).

WD repeat units lie at residues 49 to 88 (VHDGCVNTICWNDTGEYILSGSDDTKLVISNPYSRKVLTT), 92 to 133 (GHRA…ETNR), 139 to 179 (CHYG…SCTK), 189 to 229 (NCRR…TRAT), and 251 to 290 (NKSCRVTSLCYSEDGQEILVSYSSDYIYLFDPKDDTAREL). 2 stretches are compositionally biased toward basic and acidic residues: residues 288 to 303 (RELKTPSAEERREELR) and 312 to 334 (LRGDWSDTGPRARPESERERDGE). Disordered stretches follow at residues 288 to 340 (RELK…PNVS), 355 to 392 (EASEVAQSNRGRGRSRPRGGTSQSDISTLPTVPSSPDL), 407 to 490 (QFLQ…TTST), and 502 to 675 (IASS…GPGD). S336 carries the phosphoserine modification. Composition is skewed to polar residues over residues 379–388 (DISTLPTVPS) and 409–421 (LQPSTSSTMSAQA). Residues 422–441 (HSTSSPTESPHSTPLLSSPD) are compositionally biased toward low complexity. Residues 457-467 (HQSDNNNEKLS) are compositionally biased toward basic and acidic residues. Over residues 480–490 (HYSTEGTTTST) the composition is skewed to polar residues. Over residues 502–511 (IASSSRGIGS) the composition is skewed to low complexity. The span at 535–549 (SETKAPEESSEDVTK) shows a compositional bias: basic and acidic residues. Over residues 614 to 626 (TSTESATNENNTN) the composition is skewed to low complexity. Residues 627-636 (PEPQFQTEAT) show a composition bias toward polar residues. S649 bears the Phosphoserine mark. T654 carries the post-translational modification Phosphothreonine. The residue at position 657 (S657) is a Phosphoserine. The 30-residue stretch at 676–705 (RRSAVARIQEFFRRRKERKEMEELDTLNIR) folds into the IQ domain. 2 WD repeats span residues 718-756 (NSRTMIKEANFWGANFVMSGSDCGHIFIWDRHTAEHLML) and 759-798 (ADNHVVNCLQPHPFDPILASSGIDYDIKIWSPLEESRIFN). S847 and S850 each carry phosphoserine.

In terms of assembly, interacts with the nuclear receptors NR3C1 and AR in the presence of ligand. Interacts with DDB1, CUL4A and CUL4B. In terms of tissue distribution, highly expressed in skeletal muscle and testis. Expressed to a lesser degree in heart, prostate, and adrenal gland.

The protein resides in the nucleus. It participates in protein modification; protein ubiquitination. Functionally, ligand-dependent coactivator of nuclear receptors. Enhance transcriptional activity of the nuclear receptors NR3C1 and AR. May function as a substrate receptor for CUL4-DDB1 E3 ubiquitin-protein ligase complex. The sequence is that of DDB1- and CUL4-associated factor 6 (DCAF6) from Homo sapiens (Human).